Here is a 250-residue protein sequence, read N- to C-terminus: Triosephosphate isomerase (250 aa).

Residue Asn-9–Lys-11 participates in substrate binding. His-95 functions as the Electrophile in the catalytic mechanism. Glu-167 functions as the Proton acceptor in the catalytic mechanism. Residues Gly-173, Ser-213, and Gly-234–Gly-235 contribute to the substrate site.

The protein belongs to the triosephosphate isomerase family. As to quaternary structure, homodimer.

The protein localises to the cytoplasm. The catalysed reaction is D-glyceraldehyde 3-phosphate = dihydroxyacetone phosphate. It functions in the pathway carbohydrate biosynthesis; gluconeogenesis. The protein operates within carbohydrate degradation; glycolysis; D-glyceraldehyde 3-phosphate from glycerone phosphate: step 1/1. Involved in the gluconeogenesis. Catalyzes stereospecifically the conversion of dihydroxyacetone phosphate (DHAP) to D-glyceraldehyde-3-phosphate (G3P). In Flavobacterium johnsoniae (strain ATCC 17061 / DSM 2064 / JCM 8514 / BCRC 14874 / CCUG 350202 / NBRC 14942 / NCIMB 11054 / UW101) (Cytophaga johnsonae), this protein is Triosephosphate isomerase.